The following is a 107-amino-acid chain: L-rhamnose mutarotase (107 aa).

Substrate is bound at residue Y18. The active-site Proton donor is the H22. Residues Y41 and 76–77 contribute to the substrate site; that span reads WW.

The protein belongs to the rhamnose mutarotase family. In terms of assembly, homodimer.

It is found in the cytoplasm. The enzyme catalyses alpha-L-rhamnose = beta-L-rhamnose. It functions in the pathway carbohydrate metabolism; L-rhamnose metabolism. Its function is as follows. Involved in the anomeric conversion of L-rhamnose. This Paraburkholderia phytofirmans (strain DSM 17436 / LMG 22146 / PsJN) (Burkholderia phytofirmans) protein is L-rhamnose mutarotase.